Reading from the N-terminus, the 321-residue chain is G-protein coupled receptor homolog ECRF3 (321 aa).

Over 1 to 34 (MEVKLDFSSEDFSNYSYNYSGDIYYGDVAPCVVN) the chain is Extracellular. N-linked (GlcNAc...) asparagine; by host glycosylation is found at N14 and N18. The helical transmembrane segment at 35–51 (FLISESALAFIYVLMFL) threads the bilayer. Over 52 to 76 (CNAIGNSLVLRTFLKYRAQAQSFDY) the chain is Cytoplasmic. A helical membrane pass occupies residues 77–93 (LMMGFCLNSLFLAGYLL). The Extracellular portion of the chain corresponds to 94-124 (MRLLRMFEIFMNTELCKLEAFFLNLSIYWSP). N117 is a glycosylation site (N-linked (GlcNAc...) asparagine; by host). The chain crosses the membrane as a helical span at residues 125-141 (FILVFISVLRCLLIFCA). Residues 142–149 (TRLWVKKT) are Cytoplasmic-facing. The helical transmembrane segment at 150–166 (LIGQVFLCCSFVLACFG) threads the bilayer. Over 167 to 196 (ALPHVMVTSYYEPSSCIEEDGVLTEQLRTK) the chain is Extracellular. The helical transmembrane segment at 197 to 215 (LNTFHTWYSFAGPLFITVI) threads the bilayer. Residues 216-234 (CYSMSCYKLFKTKLSKRAE) are Cytoplasmic-facing. Residues 235-251 (VVTIITMTTLLFIVFCI) traverse the membrane as a helical segment. The Extracellular segment spans residues 252-286 (PYYIMESIDTLLRVGVIEETCAKRSAIVYGIQCTY). A helical transmembrane segment spans residues 287–303 (MLLVLYYCMLPLMFAMF). Topologically, residues 304 to 321 (GSLFRQRMAAWCKTICHC) are cytoplasmic.

Belongs to the G-protein coupled receptor 1 family.

It localises to the host cell membrane. May be highly relevant to the process of cellular transformation and rapid T-cell proliferation effected by HVS during latent infections of T-cells in susceptible hosts. The polypeptide is G-protein coupled receptor homolog ECRF3 (74) (Saimiri sciureus (Common squirrel monkey)).